Consider the following 97-residue polypeptide: Protein S100-A10 (97 aa).

An N6-acetyllysine mark is found at Lys23 and Lys28. An N6-acetyllysine; alternate modification is found at Lys37. A Glycyl lysine isopeptide (Lys-Gly) (interchain with G-Cter in SUMO2); alternate cross-link involves residue Lys37. N6-acetyllysine is present on residues Lys54 and Lys57. Positions 60–71 (DQCRDGKVGFQS) are ancestral calcium site.

Belongs to the S-100 family. As to quaternary structure, heterotetramer containing 2 light chains of S100A10/p11 and 2 heavy chains of ANXA2/p36. Interacts with SCN10A. Interacts with TASOR.

Its function is as follows. Because S100A10 induces the dimerization of ANXA2/p36, it may function as a regulator of protein phosphorylation in that the ANXA2 monomer is the preferred target (in vitro) of tyrosine-specific kinase. The protein is Protein S100-A10 (S100A10) of Bos taurus (Bovine).